The chain runs to 218 residues: Small ribosomal subunit protein uS3c (218 aa).

Positions 43 to 118 (IKNYVQKNMR…KLNIAITRIA (76 aa)) constitute a KH type-2 domain.

The protein belongs to the universal ribosomal protein uS3 family. As to quaternary structure, part of the 30S ribosomal subunit.

Its subcellular location is the plastid. The protein resides in the chloroplast. The polypeptide is Small ribosomal subunit protein uS3c (rps3) (Buxus microphylla (Littleleaf boxwood)).